The following is a 103-amino-acid chain: Integration host factor subunit alpha (103 aa).

Positions 55–74 (CREKPQRPGRNPKTGEEMPI) are disordered.

Belongs to the bacterial histone-like protein family. As to quaternary structure, heterodimer of an alpha and a beta chain.

This protein is one of the two subunits of integration host factor, a specific DNA-binding protein that functions in genetic recombination as well as in transcriptional and translational control. The polypeptide is Integration host factor subunit alpha (Thiobacillus denitrificans (strain ATCC 25259 / T1)).